Reading from the N-terminus, the 91-residue chain is Probable Fe(2+)-trafficking protein (91 aa).

Belongs to the Fe(2+)-trafficking protein family.

Functionally, could be a mediator in iron transactions between iron acquisition and iron-requiring processes, such as synthesis and/or repair of Fe-S clusters in biosynthetic enzymes. The sequence is that of Probable Fe(2+)-trafficking protein from Shewanella amazonensis (strain ATCC BAA-1098 / SB2B).